We begin with the raw amino-acid sequence, 108 residues long: Nucleoid-associated protein CPS_3743 (108 aa).

The segment at N87 to F108 is disordered.

Belongs to the YbaB/EbfC family. As to quaternary structure, homodimer.

The protein resides in the cytoplasm. Its subcellular location is the nucleoid. Its function is as follows. Binds to DNA and alters its conformation. May be involved in regulation of gene expression, nucleoid organization and DNA protection. The protein is Nucleoid-associated protein CPS_3743 of Colwellia psychrerythraea (strain 34H / ATCC BAA-681) (Vibrio psychroerythus).